A 199-amino-acid polypeptide reads, in one-letter code: Inosine triphosphate pyrophosphatase (199 aa).

12–17 (TGNAKK) lines the ITP pocket. Glutamate 42 provides a ligand contact to Mg(2+). ITP-binding positions include lysine 54, 70-71 (DT), lysine 87, 146-149 (FGWD), lysine 169, and 174-175 (HR).

This sequence belongs to the HAM1 NTPase family. Homodimer. Requires Mg(2+) as cofactor. Mn(2+) serves as cofactor.

The protein localises to the cytoplasm. It catalyses the reaction ITP + H2O = IMP + diphosphate + H(+). The catalysed reaction is dITP + H2O = dIMP + diphosphate + H(+). It carries out the reaction XTP + H2O = XMP + diphosphate + H(+). Functionally, pyrophosphatase that hydrolyzes non-canonical purine nucleotides such as inosine triphosphate (ITP), deoxyinosine triphosphate (dITP) or xanthosine 5'-triphosphate (XTP) to their respective monophosphate derivatives. The enzyme does not distinguish between the deoxy- and ribose forms. Probably excludes non-canonical purines from RNA and DNA precursor pools, thus preventing their incorporation into RNA and DNA and avoiding chromosomal lesions. This chain is Inosine triphosphate pyrophosphatase, found in Monosiga brevicollis (Choanoflagellate).